Reading from the N-terminus, the 351-residue chain is UDP-N-acetylglucosamine--N-acetylmuramyl-(pentapeptide) pyrophosphoryl-undecaprenol N-acetylglucosamine transferase (351 aa).

Residues 12–14, N124, R160, S188, I239, 258–263, and Q283 each bind UDP-N-acetyl-alpha-D-glucosamine; these read TGG and ALTVCE.

Belongs to the glycosyltransferase 28 family. MurG subfamily.

It is found in the cell inner membrane. The catalysed reaction is di-trans,octa-cis-undecaprenyl diphospho-N-acetyl-alpha-D-muramoyl-L-alanyl-D-glutamyl-meso-2,6-diaminopimeloyl-D-alanyl-D-alanine + UDP-N-acetyl-alpha-D-glucosamine = di-trans,octa-cis-undecaprenyl diphospho-[N-acetyl-alpha-D-glucosaminyl-(1-&gt;4)]-N-acetyl-alpha-D-muramoyl-L-alanyl-D-glutamyl-meso-2,6-diaminopimeloyl-D-alanyl-D-alanine + UDP + H(+). Its pathway is cell wall biogenesis; peptidoglycan biosynthesis. Functionally, cell wall formation. Catalyzes the transfer of a GlcNAc subunit on undecaprenyl-pyrophosphoryl-MurNAc-pentapeptide (lipid intermediate I) to form undecaprenyl-pyrophosphoryl-MurNAc-(pentapeptide)GlcNAc (lipid intermediate II). This Actinobacillus pleuropneumoniae serotype 5b (strain L20) protein is UDP-N-acetylglucosamine--N-acetylmuramyl-(pentapeptide) pyrophosphoryl-undecaprenol N-acetylglucosamine transferase.